Reading from the N-terminus, the 256-residue chain is Follistatin-related protein 3 (256 aa).

Residues 1–23 (MRPGALWPLLWGALVWAVGSVGA) form the signal peptide. Positions 34–105 (GVCWLQQGKE…SCDGVECGPG (72 aa)) constitute a TB domain. Intrachain disulfides connect cysteine 36-cysteine 59, cysteine 46-cysteine 90, cysteine 60-cysteine 93, cysteine 97-cysteine 108, cysteine 102-cysteine 117, cysteine 119-cysteine 151, cysteine 123-cysteine 144, and cysteine 133-cysteine 165. Asparagine 71 carries N-linked (GlcNAc...) asparagine glycosylation. One can recognise a Follistatin-like 1 domain in the interval 97–117 (CDGVECGPGKACRMLGGRPHC). Kazal-like domains are found at residues 111 to 167 (LGGR…RCQK) and 187 to 243 (SAHC…ICTG). The region spanning 168 to 191 (SCAQVVCPRPQSCLVDQTGSAHCV) is the Follistatin-like 2 domain. Cystine bridges form between cysteine 193/cysteine 227, cysteine 198/cysteine 220, and cysteine 209/cysteine 241. The N-linked (GlcNAc...) asparagine glycan is linked to asparagine 213.

Interacts with INHBA and INHBB. Interacts with FN1. Interacts with ADAM12. Interacts with MLLT10; the interaction enhances MLLT10 in vitro transcriptional activity and self-association. Interacts with MSTN.

The protein resides in the secreted. It is found in the nucleus. In terms of biological role, the secreted form is a binding and antagonizing protein for members of the TGF-beta family, such as activin, BMP2 and MSTN. Inhibits activin A-, activin B-, BMP2- and MSDT-induced cellular signaling; more effective on activin A than on activin B. Involved in bone formation; inhibits osteoclast differentiation. Involved in hematopoiesis; involved in differentiation of hemopoietic progenitor cells, increases hematopoietic cell adhesion to fibronectin and seems to contribute to the adhesion of hematopoietic precursor cells to the bone marrow stroma. The nuclear form is probably involved in transcriptional regulation via interaction with MLLT10. The polypeptide is Follistatin-related protein 3 (Fstl3) (Rattus norvegicus (Rat)).